A 385-amino-acid chain; its full sequence is MINTVCMKTTRILRLHLTNASLIPPGIKMLSDPRSRMISTHESQKLREYYRLLNLDEGCSVDDVRESFHKLARQYHPDSGSSDADSATFIKIEEAYRNVLSHAIKRMHAGQDKAEDAAEDEEEGKFKYNTPQHRHYLSFEGVGFGTPSQREKQYRQFRADRATEQVMEYQRQKLQREFFANSITVKDVRQSKQQKITQAIERLVEDLIQESMAKGDFDNLSGKGKPLKKFSGCSYIDPMTHNLNRILIDNGYQPEWILMQKEIKDTIEQLREALLMSRKKLGNPLSPTEQKQWAQVCEQFQEKIRKLNKRINDFNLIVPILTRQKVHFDAQKEIIRVQEMYGAFVEANEVTEENQTDVSQGEESKTPRVKAGFLNWLNLWKSIKI.

One can recognise a J domain in the interval 48–132 (EYYRLLNLDE…EGKFKYNTPQ (85 aa)). Residues 261–318 (KEIKDTIEQLREALLMSRKKLGNPLSPTEQKQWAQVCEQFQEKIRKLNKRINDFNLIV) adopt a coiled-coil conformation.

Functionally, may have a role in protein folding or as a chaperone. In Mus musculus (Mouse), this protein is DnaJ homolog subfamily C member 28 (Dnajc28).